The following is a 95-amino-acid chain: Co-chaperonin GroES (95 aa).

This sequence belongs to the GroES chaperonin family. As to quaternary structure, heptamer of 7 subunits arranged in a ring. Interacts with the chaperonin GroEL.

The protein localises to the cytoplasm. Its function is as follows. Together with the chaperonin GroEL, plays an essential role in assisting protein folding. The GroEL-GroES system forms a nano-cage that allows encapsulation of the non-native substrate proteins and provides a physical environment optimized to promote and accelerate protein folding. GroES binds to the apical surface of the GroEL ring, thereby capping the opening of the GroEL channel. This chain is Co-chaperonin GroES, found in Staphylococcus saprophyticus subsp. saprophyticus (strain ATCC 15305 / DSM 20229 / NCIMB 8711 / NCTC 7292 / S-41).